The primary structure comprises 393 residues: Prokineticin receptor 1 (393 aa).

The Extracellular portion of the chain corresponds to 1–63; that stretch reads MEITMGVMDE…NSRTFFAAKI (63 aa). 3 N-linked (GlcNAc...) asparagine glycosylation sites follow: Asn-11, Asn-14, and Asn-36. Residues 64 to 84 traverse the membrane as a helical segment; it reads VIGMALVGIMLVCGIGNFIFI. Residues 85–98 are Cytoplasmic-facing; sequence AALARYKKLRNLTN. Residues 99-119 traverse the membrane as a helical segment; sequence LLIANLAISDFLVAIVCCPFE. Over 120–145 the chain is Extracellular; the sequence is MDYYVVRQLSWEHGHVLCASVNYLRT. An intrachain disulfide couples Cys-137 to Cys-217. Residues 146-166 form a helical membrane-spanning segment; that stretch reads VSLYVSTNALLAIAIDRYLAI. The Cytoplasmic portion of the chain corresponds to 167–179; that stretch reads VHPLRPRMKYQTA. Residues 180 to 200 traverse the membrane as a helical segment; sequence TGLIALVWVVSILVAIPSAYF. At 201-232 the chain is on the extracellular side; it reads TTETVLVIVKSQEKIFCGQIWPVDQQIYYKSY. The helical transmembrane segment at 233–253 threads the bilayer; it reads FLFIFGIEFVGPVVTMTLCYA. At 254–282 the chain is on the cytoplasmic side; it reads RISRELWFKAVPGFQTEQIRKRLRCRRKT. A helical membrane pass occupies residues 283–303; sequence VLVLMCILTAYVLCWAPFYGF. Residues 304 to 322 are Extracellular-facing; the sequence is AIVRDFFPTVFVKEKHYLT. Residues 323 to 343 form a helical membrane-spanning segment; the sequence is AFYVVECIAMSNSMINTVCFV. Topologically, residues 344–393 are cytoplasmic; sequence TVKNNTIKYFKKIMLLHWKASYNGSKSSGDLDLKTTGVPATEEVDCIGLK.

It belongs to the G-protein coupled receptor 1 family.

It is found in the cell membrane. Its function is as follows. Receptor for prokineticin 1. Exclusively coupled to the G(q) subclass of heteromeric G proteins. Activation leads to mobilization of calcium, stimulation of phosphoinositide turnover and activation of p44/p42 mitogen-activated protein kinase. May play a role during early pregnancy. The polypeptide is Prokineticin receptor 1 (PROKR1) (Bos taurus (Bovine)).